Reading from the N-terminus, the 102-residue chain is P antigen family member 4 (102 aa).

Residues 1-10 (MSARVRSRSR) are compositionally biased toward basic residues. The tract at residues 1–102 (MSARVRSRSR…KTKEAGDGQP (102 aa)) is disordered. A Phosphoserine; by CLK2 modification is found at Ser7. Ser9 carries the post-translational modification Phosphoserine; by HIPK1 and CLK2. A compositionally biased stretch (basic and acidic residues) spans 45 to 85 (GQEREGTPPIEERKVEGDCQEMDLEKTRSERGDGSDVKEKT). Position 51 is a phosphothreonine; by HIPK1 and CLK2 (Thr51). Phosphothreonine; by CLK2 is present on Thr71. Phosphoserine; by CLK2 is present on residues Ser73 and Ser79. A phosphothreonine; by CLK2 mark is found at Thr85 and Thr94.

Belongs to the GAGE family. In terms of assembly, interacts with JUN. HIPK1-mediated phosphorylation at Thr-51 leads to the compaction of its intrinsically disordered conformation and is critical for its ability to potentiate the transcriptional activator activity of JUN inspite of a reduced interaction with JUN. CLK2-mediated phosphorylation at multiple Ser and Thr residues attenuates its ability to potentiate JUN transcriptional activator activity. Expressed at basal lvels in the adult normal prostate gland but is highly up-regulated in the fetal prostate and prostate cancer cells. Preferentially expressed in normal male and female reproductive tissues, testis, fallopian tube, uterus, and placenta, as well as in testicular cancer, uterine cancer, cervical cancer and kidney cancer.

It localises to the cytoplasm. It is found in the nucleus. The protein resides in the mitochondrion. Functionally, intrinsically disordered protein that potentiates the transcriptional activator activity of JUN. Protects cells from stress-induced apoptosis by inhibiting reactive oxygen species (ROS) production and via regulation of the MAPK signaling pathway. This is P antigen family member 4 (PAGE4) from Homo sapiens (Human).